A 718-amino-acid polypeptide reads, in one-letter code: Adhesin-like cell surface protein MAD1 (718 aa).

The N-terminal stretch at 1–19 (MKGAIQFLGALAAVQAVSA) is a signal peptide. Repeat copies occupy residues 217–243 (PCTE…TEPA), 244–265 (PCTE…TEPA), 266–282 (PCTE…TEPA), 283–309 (PCTE…TEPA), 310–336 (PCTE…TEPA), 337–358 (PCTE…TEPA), 359–382 (PCTE…TDEA), 383–402 (PCTD…TDEA), and 403–420 (PCTE…AVPT). A disordered region spans residues 452 to 472 (TSIPYETPSPSETETLPPSGT). One can recognise a CFEM domain in the interval 462–575 (SETETLPPSG…VTLPPVTTGA (114 aa)). Intrachain disulfides connect cysteine 494-cysteine 526, cysteine 504-cysteine 512, and cysteine 514-cysteine 548. Heme is bound at residue aspartate 509. Glycine 693 carries the GPI-anchor amidated glycine lipid modification. Residues 694–718 (AASSFKAFSTVMLAGVIGLTALIMA) constitute a propeptide, removed in mature form.

The protein belongs to the RBT5 family. In terms of processing, the GPI-anchor is attached to the protein in the endoplasmic reticulum and serves to target the protein to the cell surface. There, the glucosamine-inositol phospholipid moiety is cleaved off and the GPI-modified mannoprotein is covalently attached via its lipidless GPI glycan remnant to the 1,6-beta-glucan of the outer cell wall layer.

It localises to the secreted. It is found in the cell wall. Its subcellular location is the cell membrane. Cell surface adhesion protein that plays a key role in switching between the saprophytic lifestyle and the predacious lifestyle (nematode trapping). Likely functions to prevent energy-consuming trap formation in the absence of nematodes, and keeps the fungus in the saprophytic life style. May influence the induction signal of trap formation by limiting the porosity of the cell wall and thus affecting its permeability of nitrogen source. The chain is Adhesin-like cell surface protein MAD1 from Arthrobotrys oligospora (strain ATCC 24927 / CBS 115.81 / DSM 1491) (Nematode-trapping fungus).